Consider the following 103-residue polypeptide: Large ribosomal subunit protein eL42 (103 aa).

The interval 37-56 (GKRRYDRKQSGFGGQTKPVF) is disordered.

It belongs to the eukaryotic ribosomal protein eL42 family.

The protein is Large ribosomal subunit protein eL42 (rpl36a) of Dictyostelium discoideum (Social amoeba).